The chain runs to 98 residues: Lipolysis-activating peptide 1-alpha chain (98 aa).

Positions 1 to 22 (MMKFVLFGMIVILFSLMGSIRG) are cleaved as a signal peptide. The region spanning 26 to 89 (PGNYPTNAYG…IWNAVKNHCT (64 aa)) is the LCN-type CS-alpha/beta domain. 3 disulfide bridges follow: Cys40–Cys63, Cys49–Cys68, and Cys53–Cys70. Residue Asn96 is modified to Asparagine amide.

This sequence belongs to the long (3 C-C) scorpion toxin superfamily. In terms of assembly, monomer (edited version) and heterodimer (non-edited version) of this alpha chain and a beta chain (AC Q95P90). In terms of tissue distribution, expressed by the venom gland.

The protein resides in the secreted. In terms of biological role, the heterodimer non-edited LVP1 induces lipolysis in rat adipocytes. Induction of lipolysis by LVP1 appears to be mediated through the beta-2 adrenergic receptor pathway (ADRB2). Functionally, the edited BmKBTx, similar to beta-toxins, may modulate voltage-gated sodium channels (Nav) and may block voltage-gated potassium channels (Kv). Seems to be a rare component in the venom. This chain is Lipolysis-activating peptide 1-alpha chain (LVP1a), found in Olivierus martensii (Manchurian scorpion).